The primary structure comprises 328 residues: Probable magnesium transporter NIPA6 (328 aa).

The Extracellular portion of the chain corresponds to 1 to 4 (METD). Residues 5-25 (NGKGLILAVASSVFIGSSFIL) form a helical membrane-spanning segment. Residues 26–51 (KKKGLKRAGAIGTRAGYGGYTYLLEP) are Cytoplasmic-facing. The helical transmembrane segment at 52 to 72 (LWWAGMVTMIVGEAANFVAYI) threads the bilayer. Topologically, residues 73–76 (YAPA) are extracellular. The chain crosses the membrane as a helical span at residues 77–97 (VLVTPLGALSIIISAVLAHFL). The Cytoplasmic segment spans residues 98–104 (LKEKLKK). The helical transmembrane segment at 105 to 125 (MGVLGCVSCIVGSVVIVIHAP) threads the bilayer. The Extracellular portion of the chain corresponds to 126-142 (KEQTPNSVEEIWNLATQ). Residues 143-163 (PAFLIYVAITMSIVLALILHF) form a helical membrane-spanning segment. Over 164-175 (EPLCGQTNILVY) the chain is Cytoplasmic. Residues 176–196 (IGICSLMGALTVMSIKAIGIA) form a helical membrane-spanning segment. At 197–209 (IKLTMEGVSQIGY) the chain is on the extracellular side. A helical transmembrane segment spans residues 210-230 (PQTWLFVMVAVTCVVTQLIYL). Over 231–240 (NKALDTFNAA) the chain is Cytoplasmic. A helical membrane pass occupies residues 241–261 (IVSPVYYVMFTTLTIVASAIM). The Extracellular segment spans residues 262-269 (FKDWSGQD). A helical transmembrane segment spans residues 270–290 (AASVASELCGFITVLTGTMIL). Over 291 to 328 (HGTREEEQQQASSEHVRWYDSRKSMNEEHLVSLYSPEY) the chain is Cytoplasmic.

The protein belongs to the NIPA (TC 2.A.7) family. As to quaternary structure, homodimer.

It localises to the cell membrane. It is found in the early endosome. Functionally, acts as a Mg(2+) transporter. Can also transport other divalent cations such as Fe(2+), Sr(2+), Ba(2+), Mn(2+) and Co(2+) but to a much less extent than Mg(2+). In Arabidopsis thaliana (Mouse-ear cress), this protein is Probable magnesium transporter NIPA6.